The following is a 129-amino-acid chain: Small ribosomal subunit protein uS11 (129 aa).

The protein belongs to the universal ribosomal protein uS11 family. As to quaternary structure, part of the 30S ribosomal subunit. Interacts with proteins S7 and S18. Binds to IF-3.

Located on the platform of the 30S subunit, it bridges several disparate RNA helices of the 16S rRNA. Forms part of the Shine-Dalgarno cleft in the 70S ribosome. The sequence is that of Small ribosomal subunit protein uS11 from Methylobacterium nodulans (strain LMG 21967 / CNCM I-2342 / ORS 2060).